Here is a 244-residue protein sequence, read N- to C-terminus: Ethylene-responsive transcription factor ERF013 (244 aa).

The interval 1 to 33 is disordered; that stretch reads MVKQELKIQVTTSSSSLSHSSSSSSSSTSALRH. Positions 11 to 29 are enriched in low complexity; it reads TTSSSSLSHSSSSSSSSTS. The AP2/ERF DNA-binding region spans 42 to 99; that stretch reads KYKGVRMRSWGSWVTEIRAPNQKTRIWLGSYSTAEAAARAYDAALLCLKGPKANLNFP. The interval 123-178 is disordered; sequence QKVAAQAANSSSDHFTPPSDENDHDHDDGLDHHPSASSSAASSPPDDDHHNDDDGD. Residues 143–156 show a composition bias toward basic and acidic residues; that stretch reads ENDHDHDDGLDHHP. Positions 157 to 166 are enriched in low complexity; sequence SASSSAASSP.

This sequence belongs to the AP2/ERF transcription factor family. ERF subfamily.

The protein localises to the nucleus. Functionally, probably acts as a transcriptional activator. Binds to the GCC-box pathogenesis-related promoter element. May be involved in the regulation of gene expression by stress factors and by components of stress signal transduction pathways. This is Ethylene-responsive transcription factor ERF013 (ERF013) from Arabidopsis thaliana (Mouse-ear cress).